The primary structure comprises 262 residues: Putative ankyrin repeat protein FPV243 (262 aa).

One copy of the ANK repeat lies at 25–54 (YGSTPLFEAICNCSCKNVKLFLENNADINE).

This Vertebrata (FPV) protein is Putative ankyrin repeat protein FPV243.